The chain runs to 170 residues: Methanogen homoaconitase small subunit (170 aa).

Residues 24–27 (YLRT) carry the YLRT motif.

Belongs to the LeuD family. LeuD type 2 subfamily. In terms of assembly, heterotetramer of 2 HacA and 2 HacB proteins. Cannot form a complex with LeuC.

The enzyme catalyses (2R)-homocitrate = (2R,3S)-homoisocitrate. It catalyses the reaction (2R)-homocitrate = cis-homoaconitate + H2O. The catalysed reaction is (2R,3S)-homoisocitrate = cis-homoaconitate + H2O. It carries out the reaction cis-(homo)2aconitate + H2O = (2R,3S)-iso(homo)2citrate. The enzyme catalyses cis-(homo)3aconitate + H2O = (2R,3S)-iso(homo)3citrate. It catalyses the reaction (R)-malate = maleate + H2O. The catalysed reaction is cis-aconitate + H2O = D-threo-isocitrate. Its pathway is organic acid metabolism; 2-oxosuberate biosynthesis. Functionally, component of a hydro-lyase with broad substrate specificity for cis-unsaturated tricarboxylic acids. Catalyzes both the reversible dehydration of (R)-homocitrate ((R)-2-hydroxybutane-1,2,4-tricarboxylate) to produce cis-homoaconitate ((Z)-but-1-ene-1,2,4-tricarboxylate), and its hydration to homoisocitrate ((1R,2S)-1-hydroxybutane-1,2,4-tricarboxylate). Is also able to hydrate the analogous longer chain substrates cis-homo(2)-aconitate, cis-homo(3)-aconitate, and even the non-physiological cis-homo(4)-aconitate with similar efficiency. These reactions are part of the biosynthesis pathway of coenzyme B. Can also catalyze the hydration of maleate to (R)-malate, and that of cis-aconitate. Cannot catalyze the hydration of citraconate and the dehydration of (S)-homocitrate, citramalate, 2-isopropylmalate, 3-isopropylmalate, citrate or threo-DL-isocitrate. In Methanocaldococcus jannaschii (strain ATCC 43067 / DSM 2661 / JAL-1 / JCM 10045 / NBRC 100440) (Methanococcus jannaschii), this protein is Methanogen homoaconitase small subunit (hacB).